A 760-amino-acid chain; its full sequence is MKLNVDGLLVYFPYDYIYPEQFSYMRELKRTLDAKGHGVLEMPSGTGKTVSLLALIMAYQRAYPLEVTKLIYCSRTVPEIEKVIEELRKLLNFYEKQEGEKLPFLGLALSSRKNLCIHPEVTPLRFGKDVDGKCHSLTASYVRAQYQHDTSLPHCRFYEEFDAHGREVPLPAGIYNLDDLKALGRRQGWCPYFLARYSILHANVVVYSYHYLLDPKIADLVSKELARKAVVVFDEAHNIDNVCIDSMSVNLTRRTLDRCQGNLETLQKTVLRIKETDEQRLRDEYRRLVEGLREASAARETDAHLANPVLPDEVLQEAVPGSIRTAEHFLGFLRRLLEYVKWRLRVQHVVQESPPAFLSGLAQRVCIQRKPLRFCAERLRSLLHTLEITDLADFSPLTLLANFATLVSTYAKGFTIIIEPFDDRTPTIANPILHFSCMDASLAIKPVFERFQSVIITSGTLSPLDIYPKILDFHPVTMATFTMTLARVCLCPMIIGRGNDQVAISSKFETREDIAVIRNYGNLLLEMSAVVPDGIVAFFTSYQYMESTVASWYEQGILENIQRNKLLFIETQDGAETSVALEKYQEACENGRGAILLSVARGKVSEGIDFVHHYGRAVIMFGVPYVYTQSRILKARLEYLRDQFQIRENDFLTFDAMRHAAQCVGRAIRGKTDYGLMVFADKRFARGDKRGKLPRWIQEHLTDANLNLTVDEGVQVAKYFLRQMAQPFHREDQLGLSLLSLEQLESEETLKRIEQIAQQL.

The Helicase ATP-binding domain occupies 7–283; sequence GLLVYFPYDY…KETDEQRLRD (277 aa). 42-49 provides a ligand contact to ATP; that stretch reads MPSGTGKT. Cysteine 116, cysteine 134, cysteine 155, and cysteine 190 together coordinate [4Fe-4S] cluster. A DEAH box motif is present at residues 234–237; the sequence is DEAH. Residues 438–637 are mediates interaction with MMS19; the sequence is MDASLAIKPV…TQSRILKARL (200 aa). A Nuclear localization signal motif is present at residues 682–695; that stretch reads KRFARGDKRGKLPR.

It belongs to the helicase family. RAD3/XPD subfamily. In terms of assembly, component of the 7-subunit TFIIH core complex composed of XPB/ERCC3, XPD/ERCC2, GTF2H1, GTF2H2, GTF2H3, GTF2H4 and GTF2H5, which is active in NER. The core complex associates with the 3-subunit CDK-activating kinase (CAK) module composed of CCNH/cyclin H, CDK7 and MNAT1 to form the 10-subunit holoenzyme (holo-TFIIH) active in transcription. Interacts with GTF2H2 (p44) which stimulates the 5'-3' helicase activity of this subunit. Component of the MMXD complex, which includes CIAO1, ERCC2, CIAO2B, MMS19 and SLC25A5. Interacts with CIAO1 and CIAO2B; the interaction WITH CIAO2B is direct. Interacts with ATF7IP. Interacts directly with MMS19. Part of TBP-based Pol II pre-initiation complex (PIC), in which Pol II core assembles with general transcription factors and other specific initiation factors including GTF2E1, GTF2E2, GTF2F1, GTF2F2, TCEA1, ERCC2, ERCC3, GTF2H2, GTF2H3, GTF2H4, GTF2H5, GTF2A1, GTF2A2, GTF2B and TBP; this large multi-subunit PIC complex mediates DNA unwinding and targets Pol II core to the transcription start site where the first phosphodiester bond forms. As to quaternary structure, (Microbial infection) Interacts with Epstein-Barr virus EBNA2. Requires Mg(2+) as cofactor. The cofactor is [4Fe-4S] cluster. In terms of processing, ISGylated.

The protein resides in the nucleus. The protein localises to the cytoplasm. Its subcellular location is the cytoskeleton. It localises to the spindle. The enzyme catalyses Couples ATP hydrolysis with the unwinding of duplex DNA at the replication fork by translocating in the 5'-3' direction. This creates two antiparallel DNA single strands (ssDNA). The leading ssDNA polymer is the template for DNA polymerase III holoenzyme which synthesizes a continuous strand.. The catalysed reaction is ATP + H2O = ADP + phosphate + H(+). With respect to regulation, interaction with GTF2H2 (p44) results in stimulation of the 5'-3' helicase activity of this subunit. DNA unwinding by this subunit in TFIIH is stimulated 4-fold by XPA and 20-fold by ERCC5/XPG. ATP-dependent 5'-3' DNA helicase. Component of the general transcription and DNA repair factor IIH (TFIIH) core complex, not absolutely essential for minimal transcription in vitro. Required for transcription-coupled nucleotide excision repair (NER) of damaged DNA; recognizes damaged bases. Sequestered in chromatin on UV-damaged DNA. When complexed to CDK-activating kinase (CAK), involved in transcription by RNA polymerase II. In NER, TFIIH acts by opening DNA around the lesion to allow the excision of the damaged oligonucleotide and its replacement by a new DNA fragment. The ATP-dependent helicase activity of XPD/ERCC2 is required for DNA opening. Involved in DNA lesion verification. In transcription, TFIIH has an essential role in transcription initiation. When the pre-initiation complex (PIC) has been established, TFIIH is required for promoter opening and promoter escape. Phosphorylation of the C-terminal tail (CTD) of the largest subunit of RNA polymerase II by the kinase module CAK controls the initiation of transcription. XPD/ERCC2 acts by forming a bridge between CAK and the core-TFIIH complex. The structure of the TFIIH transcription complex differs from the NER-TFIIH complex; large movements by XPD/ERCC2 and XPB/ERCC3 are stabilized by XPA which allow this subunit to contact ssDNA. Involved in the regulation of vitamin-D receptor activity. As part of the mitotic spindle-associated MMXD complex it plays a role in chromosome segregation. Might have a role in aging process and could play a causative role in the generation of skin cancers. In Homo sapiens (Human), this protein is General transcription and DNA repair factor IIH helicase subunit XPD (ERCC2).